Consider the following 169-residue polypeptide: N-alpha-acetyltransferase 50 (169 aa).

In terms of domain architecture, N-acetyltransferase spans 6–155; sequence IELGDVTPHN…DAHVLQKNLK (150 aa). Threonine 12 is modified (phosphothreonine). Tyrosine 31 contributes to the substrate binding site. Residues lysine 34 and lysine 37 each carry the N6-acetyllysine modification. Tyrosine 73 is a catalytic residue. Residue methionine 75 participates in substrate binding. 77 to 90 is an acetyl-CoA binding site; it reads LGCLAPYRRLGIGT. A Phosphotyrosine modification is found at tyrosine 110. Histidine 112 is an active-site residue. Position 117-126 (117-126) interacts with CoA; that stretch reads NESAIDFYRK. Residues 138–141 form a substrate region; it reads YYKR. Lysine 140 is subject to N6-acetyllysine.

Belongs to the acetyltransferase family. GNAT subfamily. In terms of assembly, component of the N-terminal acetyltransferase E (NatE) complex at least composed of NAA10, NAA15 and NAA50. Interacts with NAA10. Interacts with NAA15. Predominantly interacts with NAA15 in the N-terminal acetyltransferase A complex (NatA complex); the interactions reduce the acetylation activity of the NatA complex. Component of the N-terminal acetyltransferase E (NatE)/HYPK complex at least composed of NAA10, NAA15, NAA50 and HYPK. Within the complex interacts with NAA15. Its capacity to interact with the NatA complex is reduced by HYPK. Interacts with NAA35.

Its subcellular location is the cytoplasm. It localises to the nucleus. It catalyses the reaction N-terminal L-methionyl-L-alanyl-[protein] + acetyl-CoA = N-terminal N(alpha)-acetyl-L-methionyl-L-alanyl-[protein] + CoA + H(+). The catalysed reaction is N-terminal L-methionyl-L-seryl-[protein] + acetyl-CoA = N-terminal N(alpha)-acetyl-L-methionyl-L-seryl-[protein] + CoA + H(+). The enzyme catalyses N-terminal L-methionyl-L-valyl-[protein] + acetyl-CoA = N-terminal N(alpha)-acetyl-L-methionyl-L-valyl-[protein] + CoA + H(+). It carries out the reaction N-terminal L-methionyl-L-threonyl-[protein] + acetyl-CoA = N-terminal N(alpha)-acetyl-L-methionyl-L-threonyl-[protein] + CoA + H(+). It catalyses the reaction N-terminal L-methionyl-L-lysyl-[protein] + acetyl-CoA = N-terminal N(alpha)-acetyl-L-methionyl-L-lysyl-[protein] + CoA + H(+). The catalysed reaction is N-terminal L-methionyl-L-leucyl-[protein] + acetyl-CoA = N-terminal N(alpha)-acetyl-L-methionyl-L-leucyl-[protein] + CoA + H(+). The enzyme catalyses N-terminal L-methionyl-L-phenylalanyl-[protein] + acetyl-CoA = N-terminal N(alpha)-acetyl-L-methionyl-L-phenylalanyl-[protein] + CoA + H(+). It carries out the reaction N-terminal L-methionyl-L-tyrosyl-[protein] + acetyl-CoA = N-terminal N(alpha)-acetyl-L-methionyl-L-tyrosyl-[protein] + CoA + H(+). Its function is as follows. N-alpha-acetyltransferase that acetylates the N-terminus of proteins that retain their initiating methionine. Has a broad substrate specificity: able to acetylate the initiator methionine of most peptides, except for those with a proline in second position. Also displays N-epsilon-acetyltransferase activity by mediating acetylation of the side chain of specific lysines on proteins. Autoacetylates in vivo. The relevance of N-epsilon-acetyltransferase activity is however unclear: able to acetylate H4 in vitro, but this result has not been confirmed in vivo. Component of N-alpha-acetyltransferase complexes containing NAA10 and NAA15, which has N-alpha-acetyltransferase activity. Does not influence the acetyltransferase activity of NAA10. However, it negatively regulates the N-alpha-acetyltransferase activity of the N-terminal acetyltransferase A complex (also called the NatA complex). The multiprotein complexes probably constitute the major contributor for N-terminal acetylation at the ribosome exit tunnel, with NAA10 acetylating all amino termini that are devoid of methionine and NAA50 acetylating other peptides. Required for sister chromatid cohesion during mitosis by promoting binding of CDCA5/sororin to cohesin: may act by counteracting the function of NAA10. This chain is N-alpha-acetyltransferase 50, found in Mus musculus (Mouse).